We begin with the raw amino-acid sequence, 605 residues long: Protein Spindly (605 aa).

Position 1 is an N-acetylmethionine (methionine 1). Residues 2–442 (EADIITNLRC…ELKLKYEPEE (441 aa)) adopt a coiled-coil conformation. Serine 513, serine 515, and serine 555 each carry phosphoserine. The tract at residues 544–580 (ALSERSGNTPNSPRLAAESKLQTEVKEGKETSSKLEK) is disordered. A compositionally biased stretch (basic and acidic residues) spans 564-580 (LQTEVKEGKETSSKLEK).

This sequence belongs to the Spindly family. Interacts with KNTC1 and ZW10. These interactions appear weak and may be transient or indirect. Interacts with dynein intermediate chain and dynactin (DCTN1). Interacts with the catalytically active form of USP45. In terms of processing, monoubiquitinated with'Lys-48' linkage. Deubiquitinated by USP45.

Its subcellular location is the cytoplasm. It is found in the cytoskeleton. The protein resides in the microtubule organizing center. The protein localises to the centrosome. It localises to the chromosome. Its subcellular location is the centromere. It is found in the kinetochore. The protein resides in the nucleus. The protein localises to the spindle pole. Required for the localization of dynein and dynactin to the mitotic kintochore. Dynein is believed to control the initial lateral interaction between the kinetochore and spindle microtubules and to facilitate the subsequent formation of end-on kinetochore-microtubule attachments mediated by the NDC80 complex. Also required for correct spindle orientation. Does not appear to be required for the removal of spindle assembly checkpoint (SAC) proteins from the kinetochore upon bipolar spindle attachment. Acts as an adapter protein linking the dynein motor complex to various cargos and converts dynein from a non-processive to a highly processive motor in the presence of dynactin. Facilitates the interaction between dynein and dynactin and activates dynein processivity (the ability to move along a microtubule for a long distance without falling off the track). Plays a role in cell migration. This chain is Protein Spindly, found in Homo sapiens (Human).